The sequence spans 724 residues: Long-chain-fatty-acid--CoA ligase ACSBG1 (724 aa).

The disordered stretch occupies residues 1–51; sequence MPRNSGAGYGCPHGDPSMLDSRETPQESRQDMTVGTTQEKLKTSSLTDRQP. Over residues 20 to 30 the composition is skewed to basic and acidic residues; it reads DSRETPQESRQ. Over residues 31 to 51 the composition is skewed to polar residues; that stretch reads DMTVGTTQEKLKTSSLTDRQP. Phosphoserine is present on residues Ser-53 and Ser-56. Residues 282–290, 472–477, Asp-550, and Arg-565 each bind ATP; these read TSGTTGNPK and AGYGLS. Tyr-658 bears the Phosphotyrosine mark. Lys-701 contacts ATP.

The protein belongs to the ATP-dependent AMP-binding enzyme family. Bubblegum subfamily.

The protein localises to the cytoplasm. It localises to the cytoplasmic vesicle. It is found in the microsome. The protein resides in the endoplasmic reticulum. Its subcellular location is the cell membrane. It carries out the reaction a long-chain fatty acid + ATP + CoA = a long-chain fatty acyl-CoA + AMP + diphosphate. The enzyme catalyses (E)-hexadec-2-enoate + ATP + CoA = (2E)-hexadecenoyl-CoA + AMP + diphosphate. The catalysed reaction is hexadecanoate + ATP + CoA = hexadecanoyl-CoA + AMP + diphosphate. Catalyzes the conversion of fatty acids such as long-chain and very long-chain fatty acids to their active form acyl-CoAs for both synthesis of cellular lipids, and degradation via beta-oxidation. Can activate diverse saturated, monosaturated and polyunsaturated fatty acids. In Macaca fascicularis (Crab-eating macaque), this protein is Long-chain-fatty-acid--CoA ligase ACSBG1.